The chain runs to 265 residues: Diphthine synthase (265 aa).

S-adenosyl-L-methionine contacts are provided by residues Leu-9, Asp-85, Ile-88, 113 to 114 (TA), Leu-168, Ala-211, and His-236.

It belongs to the diphthine synthase family. Homodimer.

It carries out the reaction 2-[(3S)-amino-3-carboxypropyl]-L-histidyl-[translation elongation factor 2] + 3 S-adenosyl-L-methionine = diphthine-[translation elongation factor 2] + 3 S-adenosyl-L-homocysteine + 3 H(+). It participates in protein modification; peptidyl-diphthamide biosynthesis. Functionally, S-adenosyl-L-methionine-dependent methyltransferase that catalyzes the trimethylation of the amino group of the modified target histidine residue in translation elongation factor 2 (EF-2), to form an intermediate called diphthine. The three successive methylation reactions represent the second step of diphthamide biosynthesis. The polypeptide is Diphthine synthase (Halorubrum lacusprofundi (strain ATCC 49239 / DSM 5036 / JCM 8891 / ACAM 34)).